Here is a 126-residue protein sequence, read N- to C-terminus: Flagellar protein FliT (126 aa).

The required for homodimerization stretch occupies residues methionine 1 to threonine 50. Residues methionine 60–lysine 98 form a fliD binding region.

This sequence belongs to the FliT family. In terms of assembly, homodimer. Interacts with FliD and FlhC.

Its subcellular location is the cytoplasm. The protein localises to the cytosol. Functionally, dual-function protein that regulates the transcription of class 2 flagellar operons and that also acts as an export chaperone for the filament-capping protein FliD. As a transcriptional regulator, acts as an anti-FlhDC factor; it directly binds FlhC, thus inhibiting the binding of the FlhC/FlhD complex to class 2 promoters, resulting in decreased expression of class 2 flagellar operons. As a chaperone, effects FliD transition to the membrane by preventing its premature polymerization, and by directing it to the export apparatus. This Pectobacterium carotovorum subsp. carotovorum (strain PC1) protein is Flagellar protein FliT.